Reading from the N-terminus, the 110-residue chain is ATP synthase epsilon chain (110 aa).

The protein belongs to the ATPase epsilon chain family. As to quaternary structure, F-type ATPases have 2 components, CF(1) - the catalytic core - and CF(0) - the membrane proton channel. CF(1) has five subunits: alpha(3), beta(3), gamma(1), delta(1), epsilon(1). CF(0) has three main subunits: a, b and c.

The protein resides in the cell inner membrane. In terms of biological role, produces ATP from ADP in the presence of a proton gradient across the membrane. The polypeptide is ATP synthase epsilon chain (Rickettsia typhi (strain ATCC VR-144 / Wilmington)).